Here is a 387-residue protein sequence, read N- to C-terminus: Protein-glutamate methylesterase/protein-glutamine glutaminase 2 (387 aa).

Positions 4 to 121 constitute a Response regulatory domain; it reads KVLVVDDSGF…SRNPQKVKQL (118 aa). Asp-55 bears the 4-aspartylphosphate mark. The span at 148–183 shows a compositional bias: low complexity; sequence AAPAAPTSSSRAPAPTTAPARAVPTRTAAPATAPAA. The interval 148 to 199 is disordered; it reads AAPAAPTSSSRAPAPTTAPARAVPTRTAAPATAPAAHAHHAPAHPTTSGTPK. Positions 192-384 constitute a CheB-type methylesterase domain; the sequence is PTTSGTPKRK…LDDIGRHLVE (193 aa). Catalysis depends on residues Ser-211, His-238, and Asp-331.

Belongs to the CheB family. Phosphorylated by CheA. Phosphorylation of the N-terminal regulatory domain activates the methylesterase activity.

The protein localises to the cytoplasm. The catalysed reaction is [protein]-L-glutamate 5-O-methyl ester + H2O = L-glutamyl-[protein] + methanol + H(+). It catalyses the reaction L-glutaminyl-[protein] + H2O = L-glutamyl-[protein] + NH4(+). Its function is as follows. Involved in chemotaxis. Part of a chemotaxis signal transduction system that modulates chemotaxis in response to various stimuli. Catalyzes the demethylation of specific methylglutamate residues introduced into the chemoreceptors (methyl-accepting chemotaxis proteins or MCP) by CheR. Also mediates the irreversible deamidation of specific glutamine residues to glutamic acid. The protein is Protein-glutamate methylesterase/protein-glutamine glutaminase 2 of Pseudomonas savastanoi pv. phaseolicola (strain 1448A / Race 6) (Pseudomonas syringae pv. phaseolicola (strain 1448A / Race 6)).